The sequence spans 534 residues: Cytochrome P450 714B1 (534 aa).

A topological domain (lumenal) is located at residue M1. A helical; Signal-anchor for type III membrane protein membrane pass occupies residues 2-22 (VVVVAAAMAAASLCCGVAAYL). At 23–534 (YYVLWLAPER…RSKCDWAGFD (512 aa)) the chain is on the cytoplasmic side. C472 contacts heme.

Belongs to the cytochrome P450 family. Heme serves as cofactor. As to expression, highly expressed in spikelet and uppermost internode. Detected in shoots, roots, leaves and anthers.

The protein resides in the membrane. In terms of biological role, catalyzes the 13-hydroxylation of gibberellins (GAs). Determines the ratio of GA4 and GA1. Converts GA12 into GA53. The sequence is that of Cytochrome P450 714B1 (CYP714B1) from Oryza sativa subsp. japonica (Rice).